Reading from the N-terminus, the 197-residue chain is Ribose 1,5-bisphosphate phosphokinase PhnN (197 aa).

Position 21-28 (21-28) interacts with ATP; it reads GPSGAGKD.

The protein belongs to the ribose 1,5-bisphosphokinase family.

It catalyses the reaction alpha-D-ribose 1,5-bisphosphate + ATP = 5-phospho-alpha-D-ribose 1-diphosphate + ADP. The protein operates within metabolic intermediate biosynthesis; 5-phospho-alpha-D-ribose 1-diphosphate biosynthesis; 5-phospho-alpha-D-ribose 1-diphosphate from D-ribose 5-phosphate (route II): step 3/3. Catalyzes the phosphorylation of ribose 1,5-bisphosphate to 5-phospho-D-ribosyl alpha-1-diphosphate (PRPP). The protein is Ribose 1,5-bisphosphate phosphokinase PhnN of Rhizobium etli (strain CIAT 652).